Reading from the N-terminus, the 489-residue chain is Putative ATP-dependent RNA helicase T26G10.1 (489 aa).

Residues 44-72 carry the Q motif motif; the sequence is KSFAELGVSQPLCDACQRLGWMKPSKIQQ. The 172-residue stretch at 75–246 folds into the Helicase ATP-binding domain; the sequence is LPHALQGKDV…RASLRDPARV (172 aa). 88–95 serves as a coordination point for ATP; that stretch reads AETGSGKT. Positions 194–197 match the DEAD box motif; it reads DEAD. Positions 257–417 constitute a Helicase C-terminal domain; it reads NLKQHYIFVP…EYKCVENEVM (161 aa). Residues 433 to 489 are disordered; that stretch reads EMKEMDEKKKSGKKRRQNDDFGDTEESGGRFKMGIKSMGGRGGSGGGRGGKKKKMSK. The span at 469–480 shows a compositional bias: gly residues; the sequence is SMGGRGGSGGGR.

This sequence belongs to the DEAD box helicase family. DDX47/RRP3 subfamily.

The protein localises to the nucleus. It catalyses the reaction ATP + H2O = ADP + phosphate + H(+). In terms of biological role, probable ATP-dependent RNA helicase which may be involved in ribosome biogenesis. This Caenorhabditis elegans protein is Putative ATP-dependent RNA helicase T26G10.1.